Consider the following 339-residue polypeptide: MTVRVAINGFGRIGRNVVRALYESGRRAEITVVAINELADAAGMAHLLKYDTSHGRFAWEVRQERDQLFVGDDAIRVLHERSLQSLPWRELGVDVVLDCTGVYGSREHGEAHIAAGAKKVLFSHPGSNDLDATVVYGVNQDQLRAEHRIVSNASCTTNCIIPVIKLLDDAYGIESGTVTTIHSAMHDQQVIDAYHPDLRRTRAASQSIIPIDTKLAAGITRFFPQFNDRFEAIAVRVPTINVTAIDLSVTVKKPVKANEVNLLLQKAAQGAFHGIVDYTELPLVSVDFNHDPHSAIVDGTQTRVSGAHLIKTLVWCDNEWGFANRMLDTTLAMATVAFR.

NAD(+) is bound by residues 12–13 and Arg81; that span reads RI. Residues 154-156, Arg200, 213-214, and Arg236 each bind substrate; these read SCT and TK. Catalysis depends on Cys155, which acts as the Nucleophile. Asn318 is an NAD(+) binding site.

This sequence belongs to the glyceraldehyde-3-phosphate dehydrogenase family. Epd subfamily. As to quaternary structure, homotetramer.

The protein resides in the cytoplasm. The enzyme catalyses D-erythrose 4-phosphate + NAD(+) + H2O = 4-phospho-D-erythronate + NADH + 2 H(+). It participates in cofactor biosynthesis; pyridoxine 5'-phosphate biosynthesis; pyridoxine 5'-phosphate from D-erythrose 4-phosphate: step 1/5. In terms of biological role, catalyzes the NAD-dependent conversion of D-erythrose 4-phosphate to 4-phosphoerythronate. This Shigella dysenteriae serotype 1 (strain Sd197) protein is D-erythrose-4-phosphate dehydrogenase.